Consider the following 415-residue polypeptide: 6-phospho-beta-glucosidase BglT (415 aa).

NAD(+) is bound at residue 1–64 (MRIAVIGGGS…DRFKVLISDT (64 aa)). Residues R87 and N140 each coordinate substrate. A Mn(2+)-binding site is contributed by C162. N163 contacts substrate. Residue H192 participates in Mn(2+) binding. The active-site Proton acceptor is the Y241. R261 contributes to the substrate binding site.

This sequence belongs to the glycosyl hydrolase 4 family. In terms of assembly, homodimer or homotetramer. Exists in a homodimer/homotetramer equilibrium state in solution. It depends on NAD(+) as a cofactor. Requires Mn(2+) as cofactor.

It catalyses the reaction 6-phospho-beta-D-glucosyl-(1-&gt;4)-D-glucose + H2O = D-glucose 6-phosphate + D-glucose. In terms of biological role, hydrolyzes cellobiose 6'-phosphate into glucose 6-phosphate (Glc6P) and glucose. The sequence is that of 6-phospho-beta-glucosidase BglT (bglT) from Thermotoga maritima (strain ATCC 43589 / DSM 3109 / JCM 10099 / NBRC 100826 / MSB8).